The sequence spans 156 residues: C-type lectin lectoxin-Phi1 (156 aa).

Residues 1-23 form the signal peptide; sequence MGRFIFVSLGLLVLAFSLSGIGA. Intrachain disulfides connect Cys27–Cys38, Cys55–Cys154, and Cys129–Cys146. Residues 34–155 enclose the C-type lectin domain; the sequence is HNVSCYKLIN…CNRRHRFLCK (122 aa). Asn35 and Asn109 each carry an N-linked (GlcNAc...) asparagine glycan. Positions 119 to 121 match the Mannose-binding motif; sequence EPN. Positions 127, 142, and 143 each coordinate Ca(2+).

Belongs to the true venom lectin family. As to expression, expressed by the venom gland.

The protein resides in the secreted. Mannose-binding lectin which recognizes specific carbohydrate structures and agglutinates a variety of animal cells by binding to cell-surface glycoproteins and glycolipids. May be a calcium-dependent lectin. This Philodryas olfersii (Green snake) protein is C-type lectin lectoxin-Phi1.